The sequence spans 136 residues: Protein BUNDLE SHEATH DEFECTIVE 2, chloroplastic (136 aa).

Residues 1–56 (MANSLCFFSSPPTFCFQSPSKNPKPSHFFSTNDNTSSLVQKRELLQTSRSQSFEVK) constitute a chloroplast transit peptide. The CR-type zinc finger occupies 62-133 (PQGTKPNSLV…AGFIGGFLST (72 aa)). Zn(2+) contacts are provided by Cys-72, Cys-75, Glu-78, Cys-80, Cys-83, Cys-86, Cys-107, Cys-110, Glu-115, Cys-118, and Cys-121.

It belongs to the BSD2 chaperone family. As to quaternary structure, interacts with the RuBisCo large subunit (RbcL) assembled as an intermediate complex made of eight RbcL and eight BSD2 subunits.

It localises to the plastid. The protein localises to the chloroplast stroma. In terms of biological role, chloroplast chaperone required for RuBisCo biogenesis and translational regulation of the RuBisCo large subunit (RbcL). Stabilizes an end-state assembly intermediate of eight RbcL subunits until the small subunits (RBCSs) become available to produce a complete stable RuBisCo complex containing eight small and eight large subunits. The sequence is that of Protein BUNDLE SHEATH DEFECTIVE 2, chloroplastic from Arabidopsis thaliana (Mouse-ear cress).